Consider the following 564-residue polypeptide: Iron-sensing transcriptional repressor (564 aa).

The segment at 12–36 (CSNCHKTTTSLWRRGPDNSLLCNAC) adopts a GATA-type 1 zinc-finger fold. A disordered region spans residues 100–170 (ASKSQSGRKS…SSPPHEPSVT (71 aa)). Ser109 bears the Phosphoserine mark. Residues 109–120 (SLSPNPSSVPSS) are compositionally biased toward low complexity. A compositionally biased stretch (polar residues) spans 135 to 148 (QIVSDTTTETSNGT). The GATA-type 2 zinc finger occupies 172–196 (CQNCATTNTPLWRRDESGNPICNAC). Disordered regions lie at residues 226–285 (GNAN…NTGV), 381–409 (DSSK…NPLG), and 443–496 (LLNP…VQGS). Polar residues-rich tracts occupy residues 240–253 (SGDS…QSTR), 260–271 (SFPNGNGHASGN), 381–407 (DSSK…QSNP), and 450–486 (PSNS…SPVS).

In terms of assembly, interacts with tup11.

It localises to the nucleus. Its activity is regulated as follows. Activated by iron. Transcriptional repressor that binds the consensus promoter sequence 5'-[AT]GATAA-3' during iron-replete conditions to down-regulate transcription of target genes. Represses the expression of the iron transporter fio1 in response to high iron concentrations. Also represses the expression of str1, str2 and str3. Represses the expression of shu1 in presence of iron. This Schizosaccharomyces pombe (strain 972 / ATCC 24843) (Fission yeast) protein is Iron-sensing transcriptional repressor.